We begin with the raw amino-acid sequence, 117 residues long: Non-specific lipid-transfer protein 1 (117 aa).

The first 26 residues, 1 to 26, serve as a signal peptide directing secretion; the sequence is MARAQVLLMAAALVLMLTAAPRAAVA. 4 cysteine pairs are disulfide-bonded: cysteine 29–cysteine 76, cysteine 39–cysteine 53, cysteine 54–cysteine 99, and cysteine 74–cysteine 113. Aspartate 33 carries the Cis-14-hydroxy-10,13-dioxo-7-heptadecenoic acid aspartate ester lipid modification.

This sequence belongs to the plant LTP family. In terms of tissue distribution, aleurone layer of developing and germinating seeds.

Plant non-specific lipid-transfer proteins transfer phospholipids as well as galactolipids across membranes. May play a role in wax or cutin deposition in the cell walls of expanding epidermal cells and certain secretory tissues. This Hordeum vulgare (Barley) protein is Non-specific lipid-transfer protein 1 (LTP1).